A 377-amino-acid chain; its full sequence is Queuine tRNA-ribosyltransferase (377 aa).

Asp89 acts as the Proton acceptor in catalysis. Substrate is bound by residues 89–93 (DSGGF), Asp143, Gln188, and Gly215. The RNA binding stretch occupies residues 246-252 (GVGKPED). Asp265 (nucleophile) is an active-site residue. The RNA binding; important for wobble base 34 recognition stretch occupies residues 270-274 (TRNAR). Zn(2+) contacts are provided by Cys303, Cys305, Cys308, and His334.

Belongs to the queuine tRNA-ribosyltransferase family. As to quaternary structure, homodimer. Within each dimer, one monomer is responsible for RNA recognition and catalysis, while the other monomer binds to the replacement base PreQ1. Zn(2+) serves as cofactor.

It catalyses the reaction 7-aminomethyl-7-carbaguanine + guanosine(34) in tRNA = 7-aminomethyl-7-carbaguanosine(34) in tRNA + guanine. The protein operates within tRNA modification; tRNA-queuosine biosynthesis. Its function is as follows. Catalyzes the base-exchange of a guanine (G) residue with the queuine precursor 7-aminomethyl-7-deazaguanine (PreQ1) at position 34 (anticodon wobble position) in tRNAs with GU(N) anticodons (tRNA-Asp, -Asn, -His and -Tyr). Catalysis occurs through a double-displacement mechanism. The nucleophile active site attacks the C1' of nucleotide 34 to detach the guanine base from the RNA, forming a covalent enzyme-RNA intermediate. The proton acceptor active site deprotonates the incoming PreQ1, allowing a nucleophilic attack on the C1' of the ribose to form the product. After dissociation, two additional enzymatic reactions on the tRNA convert PreQ1 to queuine (Q), resulting in the hypermodified nucleoside queuosine (7-(((4,5-cis-dihydroxy-2-cyclopenten-1-yl)amino)methyl)-7-deazaguanosine). This Acinetobacter baumannii (strain SDF) protein is Queuine tRNA-ribosyltransferase.